The sequence spans 447 residues: Clusterin (447 aa).

An N-terminal signal peptide occupies residues 1 to 21 (MKILLLCVALLLTWDNGMVLG). The Nuclear localization signal motif lies at 77 to 80 (KKKK). 5 disulfide bridges follow: C101/C312, C112/C304, C115/C301, C120/C294, and C128/C284. The N-linked (GlcNAc...) asparagine glycan is linked to N102. S132 carries the phosphoserine modification. N-linked (GlcNAc...) asparagine glycans are attached at residues N144, N290, N327, N353, and N373. S394 bears the Phosphoserine mark. The short motif at 441–445 (RRKSR) is the Nuclear localization signal element.

This sequence belongs to the clusterin family. In terms of assembly, antiparallel disulfide-linked heterodimer of an alpha chain and a beta chain. Self-associates and forms higher oligomers. Interacts with a broad range of misfolded proteins, including APP, APOC2 and LYZ. Slightly acidic pH promotes interaction with misfolded proteins. Forms high-molecular weight oligomers upon interaction with misfolded proteins. Interacts with APOA1, LRP2, CLUAP1 and PON1. Interacts with the complement membrane attack complex. Interacts (via alpha chain) with XRCC6. Interacts with SYVN1, COMMD1, BTRC, CUL1 and with ubiquitin and SCF (SKP1-CUL1-F-box protein) E3 ubiquitin-protein ligase complexes. Interacts (via alpha chain) with BAX in stressed cells, where BAX undergoes a conformation change leading to association with the mitochondrial membrane. Does not interact with BAX in unstressed cells. Found in a complex with LTF, CLU, EPPIN and SEMG1. Interacts (immaturely glycosylated pre-secreted form) with HSPA5; this interaction promotes CLU stability and facilitates stress-induced CLU retrotranslocation from the secretory pathway to the mitochondria, thereby reducing stress-induced apoptosis by stabilizing mitochondrial membrane integrity. Interacts with BCL2L1; this interaction releases and activates BAX and promotes cell death. Interacts with TGFBR2 and ACVR1. Interacts (secreted form) with STMN3; this interaction may act as an important modulator during neuronal differentiation. Interacts with VLDLR and LRP8. Proteolytically cleaved on its way through the secretory system, probably within the Golgi lumen. Proteolytic cleavage is not necessary for its chaperone activity. All non-secreted forms are not proteolytically cleaved. Chaperone activity of uncleaved forms is dependent on a non-reducing environment. Post-translationally, polyubiquitinated, leading to proteasomal degradation. Under cellular stress, the intracellular level of cleaved form is reduced due to proteasomal degradation. In terms of processing, extensively glycosylated with sulfated N-linked carbohydrates. About 30% of the protein mass is comprised of complex N-linked carbohydrate. Endoplasmic reticulum (ER) stress induces changes in glycosylation status and increases level of hypoglycosylated forms. Core carbohydrates are essential for chaperone activity. Non-secreted forms are hypoglycosylated or unglycosylated. Detected in Sertoli cells (at protein level). Detected in cultured Sertoli cells, testis, epididymis, liver and brain.

Its subcellular location is the secreted. It localises to the nucleus. The protein resides in the cytoplasm. It is found in the mitochondrion membrane. The protein localises to the cytosol. Its subcellular location is the microsome. It localises to the endoplasmic reticulum. The protein resides in the mitochondrion. It is found in the perinuclear region. The protein localises to the cytoplasmic vesicle. Its subcellular location is the secretory vesicle. It localises to the chromaffin granule. Functionally, functions as extracellular chaperone that prevents aggregation of non native proteins. Prevents stress-induced aggregation of blood plasma proteins. Inhibits formation of amyloid fibrils by APP, APOC2, B2M, CALCA, CSN3, SNCA and aggregation-prone LYZ variants (in vitro). Does not require ATP. Maintains partially unfolded proteins in a state appropriate for subsequent refolding by other chaperones, such as HSPA8/HSC70. Does not refold proteins by itself. Binding to cell surface receptors triggers internalization of the chaperone-client complex and subsequent lysosomal or proteasomal degradation. When secreted, protects cells against apoptosis and against cytolysis by complement: inhibits assembly of the complement membrane attack complex (MAC) by preventing polymerization of C9 pore component of the MAC complex. Intracellular forms interact with ubiquitin and SCF (SKP1-CUL1-F-box protein) E3 ubiquitin-protein ligase complexes and promote the ubiquitination and subsequent proteasomal degradation of target proteins. Promotes proteasomal degradation of COMMD1 and IKBKB. Modulates NF-kappa-B transcriptional activity. Following stress, promotes apoptosis. Inhibits apoptosis when associated with the mitochondrial membrane by interference with BAX-dependent release of cytochrome c into the cytoplasm. Plays a role in the regulation of cell proliferation. An intracellular form suppresses stress-induced apoptosis by stabilizing mitochondrial membrane integrity through interaction with HSPA5. Secreted form does not affect caspase or BAX-mediated intrinsic apoptosis and TNF-induced NF-kappa-B-activity. Secreted form act as an important modulator during neuronal differentiation through interaction with STMN3. Plays a role in the clearance of immune complexes that arise during cell injury. The chain is Clusterin from Rattus norvegicus (Rat).